Consider the following 122-residue polypeptide: Large ribosomal subunit protein uL14 (122 aa).

Belongs to the universal ribosomal protein uL14 family. Part of the 50S ribosomal subunit. Forms a cluster with proteins L3 and L19. In the 70S ribosome, L14 and L19 interact and together make contacts with the 16S rRNA in bridges B5 and B8.

Binds to 23S rRNA. Forms part of two intersubunit bridges in the 70S ribosome. This Synechococcus sp. (strain JA-3-3Ab) (Cyanobacteria bacterium Yellowstone A-Prime) protein is Large ribosomal subunit protein uL14.